The sequence spans 425 residues: MPMTITEKIFAEHIGREVKPGEIIMCDVDMTIGNDITTPISIRAFNESGAEKLAKPDNFAIVLDHFIPPKDIASANQAKINRDFAYKHDLKNFFDEKDMGIEHRLLPEKGLVIPGDVIIGADSHTCTHGALGAFSTGMGSTDIAFCMITGKSWFKIPESIKVVFKGERGEHVYGKDLILELIRRIGVDGALYKALEFTGEVIENLPMDDRMSLCNMAIEAGAKNGIVAYDKITEAFLEEVKKYNPLRSEPKIHYSDPDANYSQVIEIDVNKLEPLVAYPFLPSNGKPISQAVKDDIEIDQVYIGSCTNGTLSDLRIAAEILKGKRVHRRVRLIVTPATQRIYKQAEHEGILDILIDAGAVVANPTCGACLGGYMGILGDGERAVATTNRNFRGRMGSRSSEVYLSNSAVAAASAIAGKIADPRDL.

Positions 306, 366, and 369 each coordinate [4Fe-4S] cluster.

Belongs to the aconitase/IPM isomerase family. LeuC type 2 subfamily. In terms of assembly, heterodimer of LeuC and LeuD. It depends on [4Fe-4S] cluster as a cofactor.

It catalyses the reaction (2R,3S)-3-isopropylmalate = (2S)-2-isopropylmalate. The protein operates within amino-acid biosynthesis; L-leucine biosynthesis; L-leucine from 3-methyl-2-oxobutanoate: step 2/4. Catalyzes the isomerization between 2-isopropylmalate and 3-isopropylmalate, via the formation of 2-isopropylmaleate. The sequence is that of 3-isopropylmalate dehydratase large subunit from Nautilia profundicola (strain ATCC BAA-1463 / DSM 18972 / AmH).